Consider the following 957-residue polypeptide: Glycine dehydrogenase (decarboxylating) (957 aa).

N6-(pyridoxal phosphate)lysine is present on lysine 708.

Belongs to the GcvP family. In terms of assembly, the glycine cleavage system is composed of four proteins: P, T, L and H. Pyridoxal 5'-phosphate is required as a cofactor.

It carries out the reaction N(6)-[(R)-lipoyl]-L-lysyl-[glycine-cleavage complex H protein] + glycine + H(+) = N(6)-[(R)-S(8)-aminomethyldihydrolipoyl]-L-lysyl-[glycine-cleavage complex H protein] + CO2. Its function is as follows. The glycine cleavage system catalyzes the degradation of glycine. The P protein binds the alpha-amino group of glycine through its pyridoxal phosphate cofactor; CO(2) is released and the remaining methylamine moiety is then transferred to the lipoamide cofactor of the H protein. The sequence is that of Glycine dehydrogenase (decarboxylating) from Salmonella paratyphi B (strain ATCC BAA-1250 / SPB7).